The primary structure comprises 524 residues: Vang-like protein 1 (524 aa).

The segment covering M1 to S15 has biased composition (low complexity). Residues M1 to H85 are disordered. Residues M1 to S117 lie on the Cytoplasmic side of the membrane. Polar residues predominate over residues G73–H85. 2 positions are modified to phosphoserine: S86 and S88. A helical membrane pass occupies residues F118 to W138. Topologically, residues R139–G151 are extracellular. Residues L152–F172 traverse the membrane as a helical segment. Topologically, residues R173 to V182 are cytoplasmic. The chain crosses the membrane as a helical span at residues F183–F203. The Extracellular portion of the chain corresponds to Y204–Y222. The chain crosses the membrane as a helical span at residues A223–L243. Residues R244 to V524 lie on the Cytoplasmic side of the membrane.

Belongs to the Vang family. As to quaternary structure, heterodimer with VANGL2. Interacts through its C-terminal region with the N-terminal half of DVL1, DVL2 and DVL3. The PDZ domain of DVL1, DVL2 and DVL3 is required for the interaction. In terms of tissue distribution, according to PubMed:11956595, ubiquitously expressed. According to PubMed:12011995, expressed specifically in testis and ovary.

Its subcellular location is the cell membrane. The chain is Vang-like protein 1 (VANGL1) from Homo sapiens (Human).